A 128-amino-acid polypeptide reads, in one-letter code: MALMAITKNVKYFSMLGIWFFTLIDIWFLAKMIDIFLSEDSKILLVAVSIKMKLVSISNFILELIGVAKCTLYVISPLMRSICVSISDTRSVNSFTLLIITVSPSLDNANVPSKSQMERFNCSSFRIK.

This is an uncharacterized protein from Vaccinia virus (strain Copenhagen) (VACV).